The primary structure comprises 138 residues: Large ribosomal subunit protein uL16 (138 aa).

Basic residues predominate over residues 1 to 13 (MLQPSRRKFRKEQ). Positions 1–20 (MLQPSRRKFRKEQKGRNTGV) are disordered.

The protein belongs to the universal ribosomal protein uL16 family. In terms of assembly, part of the 50S ribosomal subunit.

Functionally, binds 23S rRNA and is also seen to make contacts with the A and possibly P site tRNAs. The chain is Large ribosomal subunit protein uL16 from Leptothrix cholodnii (strain ATCC 51168 / LMG 8142 / SP-6) (Leptothrix discophora (strain SP-6)).